Reading from the N-terminus, the 292-residue chain is Poly(U)-specific endoribonuclease-A (292 aa).

The 278-residue stretch at 8-285 (LNHELSKLFN…IGTAYPVLLS (278 aa)) folds into the EndoU domain. Active-site residues include His-162, His-178, and Lys-224.

This sequence belongs to the ENDOU family. As to quaternary structure, monomer. The cofactor is Mn(2+).

Its subcellular location is the nucleus. The catalysed reaction is uridylyl-uridylyl-ribonucleotide-RNA = a 3'-end uridylyl-2',3'-cyclophospho-uridine-RNA + a 5'-end dephospho-ribonucleoside-RNA. Functionally, poly(U)-specific endoribonuclease involved in the processing of intron-encoded box C/D snoRNAs, such as U16 and U86. Releases products that have 2',3'-cyclic phosphate termini at the 3'-end. This chain is Poly(U)-specific endoribonuclease-A (endou-a), found in Xenopus laevis (African clawed frog).